The following is a 963-amino-acid chain: Reversion-inducing cysteine-rich protein with Kazal motifs (963 aa).

Positions 1–28 (MAAAVAAWPWALFCLAAVPPLLSPGAAG) are cleaved as a signal peptide. The stretch at 31 to 78 (CCYHAKDNLMCRDVCEQILSSKSDSRLKHLLQRAPEYCPESMGEVWGC) is one Knot 1 repeat. Positions 31 to 332 (CCYHAKDNLM…NAVEVSMLTC (302 aa)) are 5 X Knot repeats. N-linked (GlcNAc...) asparagine glycosylation is present at Asn-80. 2 Knot repeats span residues 98-135 (CCELAIAVECRQACKQASSKNDILKVCRKEYENALFSC) and 145-191 (CCSY…LIHC). N-linked (GlcNAc...) asparagine glycosylation occurs at Asn-194. 2 Knot repeats span residues 210-257 (CCDR…LWQC) and 286-332 (CCSK…MLTC). 2 N-linked (GlcNAc...) asparagine glycosylation sites follow: Asn-291 and Asn-346. Kazal-like domains follow at residues 621-667 (KFTG…SCIS), 692-746 (SFGK…PCQP), and 749-783 (KSVEPVCGHNGETYSSVCAAYSDRVAVDYYGHCQA). 6 cysteine pairs are disulfide-bonded: Cys-627-Cys-652, Cys-629-Cys-648, Cys-637-Cys-665, Cys-710-Cys-729, Cys-718-Cys-744, and Cys-755-Cys-781. A lipid anchor (GPI-anchor amidated serine) is attached at Ser-936. The propeptide occupies 937–963 (PSVKVGPVLHCLFISFSFTLLKLMDYI).

The protein belongs to the RECK family. In terms of assembly, interacts (via knot repeats) with WNT7A (via disordered linker region); the interaction is direct. Interacts (via knot repeats) with WNT7B (via disordered linker region); the interaction is direct. Interacts with ADGRA2; the interaction is direct. Localizes to the plasma membrane via its GPI-anchor. Released from the plasma membrane following cleavage of the GPI-anchor by GDPD5/GPE2.

Its subcellular location is the cell membrane. Its function is as follows. Functions together with ADGRA2 to enable brain endothelial cells to selectively respond to Wnt7 signals (WNT7A or WNT7B). Plays a key role in Wnt7-specific responses: required for central nervous system (CNS) angiogenesis and blood-brain barrier regulation. Acts as a Wnt7-specific coactivator of canonical Wnt signaling by decoding Wnt ligands: acts by interacting specifically with the disordered linker region of Wnt7, thereby conferring ligand selectivity for Wnt7. ADGRA2 is then required to deliver RECK-bound Wnt7 to frizzled by assembling a higher-order RECK-ADGRA2-Fzd-LRP5-LRP6 complex. Also acts as a serine protease inhibitor. The polypeptide is Reversion-inducing cysteine-rich protein with Kazal motifs (Gallus gallus (Chicken)).